The primary structure comprises 397 residues: Tryptophan synthase beta chain (397 aa).

Residue lysine 90 is modified to N6-(pyridoxal phosphate)lysine.

This sequence belongs to the TrpB family. Tetramer of two alpha and two beta chains. Pyridoxal 5'-phosphate serves as cofactor.

It carries out the reaction (1S,2R)-1-C-(indol-3-yl)glycerol 3-phosphate + L-serine = D-glyceraldehyde 3-phosphate + L-tryptophan + H2O. It functions in the pathway amino-acid biosynthesis; L-tryptophan biosynthesis; L-tryptophan from chorismate: step 5/5. In terms of biological role, the beta subunit is responsible for the synthesis of L-tryptophan from indole and L-serine. This Nitrosomonas europaea (strain ATCC 19718 / CIP 103999 / KCTC 2705 / NBRC 14298) protein is Tryptophan synthase beta chain.